A 500-amino-acid chain; its full sequence is MRNQQSTQLLFELSRAGRRAHRLGDLDVPSVNVDELFADEALAETPPPLPELAEGDVVRHFVGLSTLNMSVDTHFYPLGSCTMKYNPKRNERIASLPGFLNVHPLQHESGLQGLLELLYELQGMFAEISGLPGVSMQPAAGAHGELAALLVAAAYFREQGSDRNVVLTADSAHGTNPASAQMAGFKTKTVKSNANGLVDLEDLKAKLDDKTAVFMLTNPNTLGLFDRQIEEINKLVHDAGALIYLDGANMNAILGITRPGDFGADLMHYNPHKTFSGPHGGGGPGAGPICVRDFLAKYLPGPIVTRVENENASGDDDRYTYHLTSPSDDSIGRVRSFFGNTGVLVRAYIYLRTYGGDGLRHVSEDAVLGANYLLSKVKHFLDVPHGDRCMHEFVASATRLKKEKKLSAMDIAKRILDYGFHAPTVYFPLVVDEAVMVEPTETESKQTLDAFVEALFRITEEGEELIHDAPHSTRISRPDDVTAARRPILKWTDAAGESAT.

Lys-273 bears the N6-(pyridoxal phosphate)lysine mark.

This sequence belongs to the GcvP family. C-terminal subunit subfamily. The glycine cleavage system is composed of four proteins: P, T, L and H. In this organism, the P 'protein' is a heterodimer of two subunits. Requires pyridoxal 5'-phosphate as cofactor.

The catalysed reaction is N(6)-[(R)-lipoyl]-L-lysyl-[glycine-cleavage complex H protein] + glycine + H(+) = N(6)-[(R)-S(8)-aminomethyldihydrolipoyl]-L-lysyl-[glycine-cleavage complex H protein] + CO2. In terms of biological role, the glycine cleavage system catalyzes the degradation of glycine. The P protein binds the alpha-amino group of glycine through its pyridoxal phosphate cofactor; CO(2) is released and the remaining methylamine moiety is then transferred to the lipoamide cofactor of the H protein. This chain is Probable glycine dehydrogenase (decarboxylating) subunit 2, found in Rhodopirellula baltica (strain DSM 10527 / NCIMB 13988 / SH1).